Here is a 294-residue protein sequence, read N- to C-terminus: 33 kDa chaperonin (294 aa).

Intrachain disulfides connect C238/C240 and C271/C274.

It belongs to the HSP33 family. In terms of processing, under oxidizing conditions two disulfide bonds are formed involving the reactive cysteines. Under reducing conditions zinc is bound to the reactive cysteines and the protein is inactive.

It localises to the cytoplasm. Functionally, redox regulated molecular chaperone. Protects both thermally unfolding and oxidatively damaged proteins from irreversible aggregation. Plays an important role in the bacterial defense system toward oxidative stress. This Clostridium tetani (strain Massachusetts / E88) protein is 33 kDa chaperonin.